The chain runs to 629 residues: tRNA uridine 5-carboxymethylaminomethyl modification enzyme MnmG (629 aa).

Residues glycine 13 to glycine 18, valine 125, and serine 180 contribute to the FAD site. Position 273–287 (glycine 273–phenylalanine 287) interacts with NAD(+). Glutamine 370 is an FAD binding site.

The protein belongs to the MnmG family. Homodimer. Heterotetramer of two MnmE and two MnmG subunits. It depends on FAD as a cofactor.

The protein localises to the cytoplasm. In terms of biological role, NAD-binding protein involved in the addition of a carboxymethylaminomethyl (cmnm) group at the wobble position (U34) of certain tRNAs, forming tRNA-cmnm(5)s(2)U34. The sequence is that of tRNA uridine 5-carboxymethylaminomethyl modification enzyme MnmG from Escherichia coli (strain SMS-3-5 / SECEC).